Here is a 346-residue protein sequence, read N- to C-terminus: Short-wave-sensitive opsin 1 (346 aa).

The Extracellular segment spans residues 1 to 31 (MSGEDDFYLFQNISSVGPWDGPQYHLAPVWA). N-linked (GlcNAc...) asparagine glycosylation occurs at Asn-12. The helical transmembrane segment at 32-56 (FRLQAAFMGFVFFVGTPLNAIVLVA) threads the bilayer. Over 57-68 (TLHYKKLRQPLN) the chain is Cytoplasmic. Residues 69-94 (YILVNVSLGGFLFCIFSVFTVFIASC) traverse the membrane as a helical segment. At 95–108 (HGYFLFGRHVCALE) the chain is on the extracellular side. An intrachain disulfide couples Cys-105 to Cys-182. A helical membrane pass occupies residues 109–128 (AFLGSVAGLVTGWSLAFLAF). The Cytoplasmic portion of the chain corresponds to 129–147 (ERYVVICKPFGSIRFNSKH). A helical transmembrane segment spans residues 148–171 (ALMVVLATWIIGIGVSIPPFFGWS). Residues 172-197 (RFIPEGLQCSCGPDWYTVGTKYRSEY) are Extracellular-facing. Residues 198–225 (YTWFLFIFCFIIPLSLICFSYSQLLRTL) traverse the membrane as a helical segment. Residues 226 to 247 (RAVAAQQQESATTQKAEREVSH) are Cytoplasmic-facing. The chain crosses the membrane as a helical span at residues 248 to 271 (MVVVMVGSFCLCYVPYAALAMYMV). Residues 272–279 (NNRNHGLD) are Extracellular-facing. The helical transmembrane segment at 280 to 304 (LRLVTIPAFFSKSSCVYNPIIYCFM) threads the bilayer. Lys-291 carries the N6-(retinylidene)lysine modification. At 305–346 (NKQFRACILEMVCRKPMADESDVSGSQKTEVSTVSSSKVGPH) the chain is on the cytoplasmic side. The disordered stretch occupies residues 324-346 (ESDVSGSQKTEVSTVSSSKVGPH). Low complexity predominate over residues 330 to 346 (SQKTEVSTVSSSKVGPH).

This sequence belongs to the G-protein coupled receptor 1 family. Opsin subfamily. Post-translationally, phosphorylated on some or all of the serine and threonine residues present in the C-terminal region. As to expression, expressed in the inner and outer segments of cone photoreceptor cells in the retina (at protein level).

The protein resides in the cell membrane. It localises to the photoreceptor inner segment. It is found in the cell projection. Its subcellular location is the cilium. The protein localises to the photoreceptor outer segment. The protein resides in the cytoplasm. It localises to the perinuclear region. Visual pigments are the light-absorbing molecules that mediate vision. They consist of an apoprotein, opsin, covalently linked to cis-retinal. Required for the maintenance of cone outer segment organization in the ventral retina, but not essential for the maintenance of functioning cone photoreceptors. Involved in ensuring correct abundance and localization of retinal membrane proteins. May increase spectral sensitivity in dim light. This Mus musculus (Mouse) protein is Short-wave-sensitive opsin 1 (Opn1sw).